Consider the following 591-residue polypeptide: Serine/threonine-protein phosphatase PP2A 65 kDa regulatory subunit (591 aa).

Residue Ala-2 is modified to N-acetylalanine. HEAT repeat units follow at residues 10–48 (DSLY…GEER), 49–86 (TRSE…GGPE), 87–125 (FAMY…SAQD), 126–163 (LEIH…VTQP), 164–202 (VKAE…ETEY), 203–241 (LKSD…PQDD), 242–280 (VEHL…GPEI), 281–323 (TRVD…QVQI), 324–362 (ILSS…GAYQ), 363–401 (TVEQ…GIQQ), 402–440 (LSQS…GQEF), 441–479 (FDQK…GAPW), 480–518 (AEQA…GTDI), 519–557 (TTKL…EASV), and 558–591 (IDAQ…IAAA).

The protein belongs to the phosphatase 2A regulatory subunit A family. PP2A exists in several trimeric forms, all of which consist of a core composed of a catalytic subunit associated with a 65 kDa regulatory subunit (PR65) (subunit A). The core complex associates with a third, variable subunit (subunit B), which confers distinct properties to the holoenzyme. Interacts with the inorganic phosphate transporter PXo (CG10483). Component of the Integrator-PP2A (INTAC) complex, composed of the Integrator core complex and protein phosphatase 2A subunits mts/PP2A and Pp2A-29B. In terms of tissue distribution, expression varies in tissues throughout development. Highly distributed expression in early embryos. In late embryonal development, found at high levels in nervous system and gonads. In third instar larvae, found in brain, imaginal disks and salivary glands.

Its subcellular location is the nucleus. In terms of biological role, the PR65 subunit of protein phosphatase 2A serves as a scaffolding molecule to coordinate the assembly of the catalytic subunit and a variable regulatory B subunit. Key mediator of a quality checkpoint during transcription elongation as part of the Integrator-PP2A (INTAC) complex. The INTAC complex drives premature transcription termination of transcripts that are unfavorably configured for transcriptional elongation: within the INTAC complex, acts as a scaffolding subunit for mts/PP2A, which catalyzes dephosphorylation of the C-terminal domain (CTD) of Pol II subunit POLR2A/RPB1 and Spt5, thereby preventing transcriptional elongation. The protein is Serine/threonine-protein phosphatase PP2A 65 kDa regulatory subunit (Pp2A-29B) of Drosophila melanogaster (Fruit fly).